Reading from the N-terminus, the 279-residue chain is Malonyl-[acyl-carrier protein] O-methyltransferase (279 aa).

This sequence belongs to the methyltransferase superfamily.

It catalyses the reaction malonyl-[ACP] + S-adenosyl-L-methionine = malonyl-[ACP] methyl ester + S-adenosyl-L-homocysteine. Its pathway is cofactor biosynthesis; biotin biosynthesis. In terms of biological role, converts the free carboxyl group of a malonyl-thioester to its methyl ester by transfer of a methyl group from S-adenosyl-L-methionine (SAM). It allows to synthesize pimeloyl-ACP via the fatty acid synthetic pathway. The chain is Malonyl-[acyl-carrier protein] O-methyltransferase from Hahella chejuensis (strain KCTC 2396).